The primary structure comprises 444 residues: 23S rRNA (uracil(1939)-C(5))-methyltransferase RlmD (444 aa).

The TRAM domain occupies Asn11 to Lys70. Positions 83, 89, 92, and 171 each coordinate [4Fe-4S] cluster. S-adenosyl-L-methionine contacts are provided by Gln277, Phe306, Asn311, Glu327, Asp354, and Asp376. The active-site Nucleophile is Cys402.

This sequence belongs to the class I-like SAM-binding methyltransferase superfamily. RNA M5U methyltransferase family. RlmD subfamily.

The enzyme catalyses uridine(1939) in 23S rRNA + S-adenosyl-L-methionine = 5-methyluridine(1939) in 23S rRNA + S-adenosyl-L-homocysteine + H(+). Functionally, catalyzes the formation of 5-methyl-uridine at position 1939 (m5U1939) in 23S rRNA. This chain is 23S rRNA (uracil(1939)-C(5))-methyltransferase RlmD, found in Psychromonas ingrahamii (strain DSM 17664 / CCUG 51855 / 37).